We begin with the raw amino-acid sequence, 571 residues long: Proline-rich protein 35 (571 aa).

Disordered regions lie at residues 1-27 (MSRE…PHYI), 79-187 (GSTT…EGSV), 286-402 (APVS…GSPE), and 476-571 (GPQA…GAEV). The span at 16-26 (ARSRKPKKPHY) shows a compositional bias: basic residues. Residues 165 to 175 (GMGGDPRGVGA) show a composition bias toward gly residues. Residues 316–336 (TPRDPGQEGELERAAQSDPRR) show a composition bias toward basic and acidic residues. Positions 351-367 (PSLTRFCSRSSLPTGSS) are enriched in polar residues. Pro residues predominate over residues 380–399 (PETPGPEGPLPLQPRGPVPG).

The chain is Proline-rich protein 35 (PRR35) from Homo sapiens (Human).